The chain runs to 236 residues: Phosphoribosylaminoimidazole-succinocarboxamide synthase (236 aa).

Belongs to the SAICAR synthetase family.

The enzyme catalyses 5-amino-1-(5-phospho-D-ribosyl)imidazole-4-carboxylate + L-aspartate + ATP = (2S)-2-[5-amino-1-(5-phospho-beta-D-ribosyl)imidazole-4-carboxamido]succinate + ADP + phosphate + 2 H(+). It functions in the pathway purine metabolism; IMP biosynthesis via de novo pathway; 5-amino-1-(5-phospho-D-ribosyl)imidazole-4-carboxamide from 5-amino-1-(5-phospho-D-ribosyl)imidazole-4-carboxylate: step 1/2. In Campylobacter jejuni subsp. doylei (strain ATCC BAA-1458 / RM4099 / 269.97), this protein is Phosphoribosylaminoimidazole-succinocarboxamide synthase.